A 93-amino-acid polypeptide reads, in one-letter code: UPF0223 protein YfdD (93 aa).

This sequence belongs to the UPF0223 family.

This Lactococcus lactis subsp. lactis (strain IL1403) (Streptococcus lactis) protein is UPF0223 protein YfdD (yfdD).